A 359-amino-acid polypeptide reads, in one-letter code: MSTPASTPAPDGSHQRDHHPGTRVEFRGVTKVFTNNKNTETVALDDVSLTVEPGEVIGIIGYSGAGKSTLVRMINGLDTPTSGALLLDGTDIVGMPEAKMRKLRSRIGMIFQQFNLFQSRTAAGNVEYPLELAKMDKAQRKARVREMLDFVGLSDKGRNYPEQLSGGQKQRVGIARALATNPSLLLADEATSALDPETTQEVLALLRKVNKELGITIVVITHEMEVVRSIADKVAVMEAGRVVEYGSVYEVFSNPQTTVAQRFVATALRNTPDMVEEEDLLFHEGRLFTIDLTEDSGFFAASAIAADNGVSINVVHGGVTTLQRQSFGKITVRLTGNPAAIEEFHRSLTRTTTIKEITR.

Positions 1-21 are disordered; that stretch reads MSTPASTPAPDGSHQRDHHPG. Residues 24-264 enclose the ABC transporter domain; sequence VEFRGVTKVF…PQTTVAQRFV (241 aa). 61-68 is a binding site for ATP; sequence GYSGAGKS.

Belongs to the ABC transporter superfamily. Methionine importer (TC 3.A.1.24) family. The complex is composed of two ATP-binding proteins (MetN), two transmembrane proteins (MetI) and a solute-binding protein (MetQ).

The protein resides in the cell membrane. It catalyses the reaction L-methionine(out) + ATP + H2O = L-methionine(in) + ADP + phosphate + H(+). The catalysed reaction is D-methionine(out) + ATP + H2O = D-methionine(in) + ADP + phosphate + H(+). Part of the ABC transporter complex MetNIQ involved in methionine import. Responsible for energy coupling to the transport system. In Corynebacterium efficiens (strain DSM 44549 / YS-314 / AJ 12310 / JCM 11189 / NBRC 100395), this protein is Methionine import ATP-binding protein MetN.